Consider the following 436-residue polypeptide: 3-ketoacyl-CoA thiolase (436 aa).

Catalysis depends on C99, which acts as the Acyl-thioester intermediate. Residues H392 and C422 each act as proton acceptor in the active site.

It belongs to the thiolase-like superfamily. Thiolase family. As to quaternary structure, heterotetramer of two alpha chains (FadJ) and two beta chains (FadI).

Its subcellular location is the cytoplasm. It catalyses the reaction an acyl-CoA + acetyl-CoA = a 3-oxoacyl-CoA + CoA. It participates in lipid metabolism; fatty acid beta-oxidation. Its function is as follows. Catalyzes the final step of fatty acid oxidation in which acetyl-CoA is released and the CoA ester of a fatty acid two carbons shorter is formed. This is 3-ketoacyl-CoA thiolase from Shewanella piezotolerans (strain WP3 / JCM 13877).